Consider the following 303-residue polypeptide: Polyisoprenyl-teichoic acid--peptidoglycan teichoic acid transferase TagU (303 aa).

At 1–4 (MKKK) the chain is on the cytoplasmic side. Residues 5–25 (ILFWVLGILGVLIIGGGIYAY) form a helical; Signal-anchor for type II membrane protein membrane-spanning segment. At 26–303 (NVYSSVSNTL…KLRSHLEVTK (278 aa)) the chain is on the extracellular side.

This sequence belongs to the LytR/CpsA/Psr (LCP) family.

The protein localises to the cell membrane. It functions in the pathway cell wall biogenesis. Its function is as follows. May catalyze the final step in cell wall teichoic acid biosynthesis, the transfer of the anionic cell wall polymers (APs) from their lipid-linked precursor to the cell wall peptidoglycan (PG). The sequence is that of Polyisoprenyl-teichoic acid--peptidoglycan teichoic acid transferase TagU from Bacillus cereus (strain AH820).